Consider the following 327-residue polypeptide: Undecaprenyl-phosphate 4-deoxy-4-formamido-L-arabinose transferase (327 aa).

A run of 2 helical transmembrane segments spans residues 235 to 255 (LLSL…VLLV) and 270 to 290 (VFTL…GMGL).

It belongs to the glycosyltransferase 2 family.

It is found in the cell inner membrane. It catalyses the reaction UDP-4-deoxy-4-formamido-beta-L-arabinose + di-trans,octa-cis-undecaprenyl phosphate = 4-deoxy-4-formamido-alpha-L-arabinopyranosyl di-trans,octa-cis-undecaprenyl phosphate + UDP. The protein operates within glycolipid biosynthesis; 4-amino-4-deoxy-alpha-L-arabinose undecaprenyl phosphate biosynthesis; 4-amino-4-deoxy-alpha-L-arabinose undecaprenyl phosphate from UDP-4-deoxy-4-formamido-beta-L-arabinose and undecaprenyl phosphate: step 1/2. Its pathway is bacterial outer membrane biogenesis; lipopolysaccharide biosynthesis. Functionally, catalyzes the transfer of 4-deoxy-4-formamido-L-arabinose from UDP to undecaprenyl phosphate. The modified arabinose is attached to lipid A and is required for resistance to polymyxin and cationic antimicrobial peptides. The polypeptide is Undecaprenyl-phosphate 4-deoxy-4-formamido-L-arabinose transferase (Yersinia pseudotuberculosis serotype IB (strain PB1/+)).